The primary structure comprises 75 residues: RNA-binding protein Hfq (75 aa).

In terms of domain architecture, Sm spans 9–69; sequence DQFLNQLRKE…ISTFAPERNI (61 aa).

It belongs to the Hfq family. As to quaternary structure, homohexamer.

Functionally, RNA chaperone that binds small regulatory RNA (sRNAs) and mRNAs to facilitate mRNA translational regulation in response to envelope stress, environmental stress and changes in metabolite concentrations. Also binds with high specificity to tRNAs. This Geobacillus kaustophilus (strain HTA426) protein is RNA-binding protein Hfq.